A 341-amino-acid chain; its full sequence is Phospholipid phosphatase homolog 1.2 homolog (341 aa).

3 helical membrane-spanning segments follow: residues L30–V50, I71–V91, and L122–V142. Residue N162 is glycosylated (N-linked (GlcNAc...) asparagine). Helical transmembrane passes span R223–S243 and V257–F277. Disordered regions lie at residues S284–R308 and F322–A341. Over residues R299 to R308 the composition is skewed to basic and acidic residues.

Belongs to the PA-phosphatase related phosphoesterase family.

The protein resides in the membrane. The sequence is that of Phospholipid phosphatase homolog 1.2 homolog from Caenorhabditis elegans.